A 597-amino-acid polypeptide reads, in one-letter code: uncharacterized protein (597 aa).

In terms of domain architecture, Helicase ATP-binding spans leucine 48–threonine 198. Tyrosine 61 to threonine 68 lines the ATP pocket. Positions aspartate 146 to histidine 149 match the DEVH box motif. Positions lysine 275–valine 467 constitute a Helicase C-terminal domain.

Belongs to the helicase family.

Its function is as follows. The presence of the two linear plasmids, termed pGKL1 and pGKL2, in strains of Kluyveromyces lactis confers the killer phenotype to the host cell, by promoting the secretion of a toxin able to inhibit the growth of sensitive strains. This is an uncharacterized protein from Kluyveromyces lactis (strain ATCC 8585 / CBS 2359 / DSM 70799 / NBRC 1267 / NRRL Y-1140 / WM37) (Yeast).